Consider the following 192-residue polypeptide: Xanthine phosphoribosyltransferase (192 aa).

Residues L20 and N27 each contribute to the xanthine site. Residue A128–A132 participates in 5-phospho-alpha-D-ribose 1-diphosphate binding. Xanthine is bound at residue K156.

Belongs to the purine/pyrimidine phosphoribosyltransferase family. Xpt subfamily. Homodimer.

Its subcellular location is the cytoplasm. It carries out the reaction XMP + diphosphate = xanthine + 5-phospho-alpha-D-ribose 1-diphosphate. Its pathway is purine metabolism; XMP biosynthesis via salvage pathway; XMP from xanthine: step 1/1. In terms of biological role, converts the preformed base xanthine, a product of nucleic acid breakdown, to xanthosine 5'-monophosphate (XMP), so it can be reused for RNA or DNA synthesis. The polypeptide is Xanthine phosphoribosyltransferase (Listeria monocytogenes serotype 4b (strain F2365)).